The sequence spans 459 residues: Argininosuccinate lyase (459 aa).

Belongs to the lyase 1 family. Argininosuccinate lyase subfamily.

The protein localises to the cytoplasm. It catalyses the reaction 2-(N(omega)-L-arginino)succinate = fumarate + L-arginine. It functions in the pathway amino-acid biosynthesis; L-arginine biosynthesis; L-arginine from L-ornithine and carbamoyl phosphate: step 3/3. The sequence is that of Argininosuccinate lyase from Lactococcus lactis subsp. cremoris (strain MG1363).